The primary structure comprises 805 residues: Sucrose synthase 1 (805 aa).

The GT-B glycosyltransferase stretch occupies residues methionine 274–threonine 751.

It belongs to the glycosyltransferase 1 family. Plant sucrose synthase subfamily.

The catalysed reaction is an NDP-alpha-D-glucose + D-fructose = a ribonucleoside 5'-diphosphate + sucrose + H(+). Its function is as follows. Sucrose-cleaving enzyme that provides UDP-glucose and fructose for various metabolic pathways. The protein is Sucrose synthase 1 of Tulipa gesneriana (Garden tulip).